The following is a 121-amino-acid chain: Fluoride-specific ion channel FluC 1 (121 aa).

Transmembrane regions (helical) follow at residues 3 to 23 (YVYI…ISFL), 35 to 55 (IANL…IAFF), 64 to 84 (AITT…LELI), and 92 to 112 (FITL…LCYV). Na(+) is bound by residues Gly-71 and Thr-74.

This sequence belongs to the fluoride channel Fluc/FEX (TC 1.A.43) family.

It localises to the cell membrane. The enzyme catalyses fluoride(in) = fluoride(out). Its activity is regulated as follows. Na(+) is not transported, but it plays an essential structural role and its presence is essential for fluoride channel function. Fluoride-specific ion channel. Important for reducing fluoride concentration in the cell, thus reducing its toxicity. The sequence is that of Fluoride-specific ion channel FluC 1 from Staphylococcus aureus (strain NCTC 8325 / PS 47).